Reading from the N-terminus, the 276-residue chain is DNA repair protein RecO (276 aa).

This sequence belongs to the RecO family.

Its function is as follows. Involved in DNA repair and RecF pathway recombination. This is DNA repair protein RecO from Mycobacterium sp. (strain JLS).